The following is a 564-amino-acid chain: MDIKRTVLWVVFSFSLLMLWDNYNRYTGKPSIFFDNPTTQAAKPAAATDDGKTAAAPTADVPTSSAHAANATGVPDSVAPTKSEIVTITTDLIKADIDTVGGEIRHLELLTHHESSDSTKDIVLFDSTPPRTYLGQTGLIGGAYPNHKSLFTVRPGPRSLEAGDQVQLVLEAEQNGVKLVKTYTFKRGEYKIDIKHDVINKTAAAINPSLYLQLVRDGSKLNNESMFYSTFTGPAVYSDSDKFQKVTFESIEKGKIEHVVKAESGWIAMVQHYFVSAFVPPANVPREYFTKKLATNLYAVGAIMPMGAVAPGATQSMDATLYSGPQESKRLEAVAPGFELVKDYGWLTIIAKPIFWLMIQIHQLLGNWGWTIVVLTIVIKLAFFPLSAASYRSMAKMKLVTPKMTEIRTKYKGEPQKMNAAMMELYKKEKINPLGGCMPIVIQIPVFISLYWVLLASVEMRNAPWLWISDLASPDTLFGSYMIGSFHLTIGILPILMAISMFIQTKLNPTPPDPIQAKVMMFMPIAFSLMFFFFPAGLVLYWVVNNILSIAQQWTISKKMGIVN.

Residues 7-24 (VLWVVFSFSLLMLWDNYN) traverse the membrane as a helical segment. The segment covering 43–60 (KPAAATDDGKTAAAPTAD) has biased composition (low complexity). Residues 43-76 (KPAAATDDGKTAAAPTADVPTSSAHAANATGVPD) are disordered. Helical transmembrane passes span 293–313 (LATNLYAVGAIMPMGAVAPGA), 341–361 (VKDYGWLTIIAKPIFWLMIQI), 364–384 (LLGNWGWTIVVLTIVIKLAFF), 438–458 (MPIVIQIPVFISLYWVLLASV), 483–503 (IGSFHLTIGILPILMAISMFI), and 524–544 (PIAFSLMFFFFPAGLVLYWVV).

The protein belongs to the OXA1/ALB3/YidC family. Type 1 subfamily. In terms of assembly, interacts with the Sec translocase complex via SecD. Specifically interacts with transmembrane segments of nascent integral membrane proteins during membrane integration.

It is found in the cell inner membrane. Required for the insertion and/or proper folding and/or complex formation of integral membrane proteins into the membrane. Involved in integration of membrane proteins that insert both dependently and independently of the Sec translocase complex, as well as at least some lipoproteins. Aids folding of multispanning membrane proteins. The protein is Membrane protein insertase YidC of Janthinobacterium sp. (strain Marseille) (Minibacterium massiliensis).